A 474-amino-acid chain; its full sequence is 15-cis-phytoene desaturase (474 aa).

It belongs to the carotenoid/retinoid oxidoreductase family.

It is found in the cell membrane. It carries out the reaction 2 a plastoquinone + 15-cis-phytoene = 9,9',15-tri-cis-zeta-carotene + 2 a plastoquinol. It participates in carotenoid biosynthesis; lycopene biosynthesis. With respect to regulation, inhibited by the herbicide norflurazon in a non-competitive way. Functionally, this enzyme converts phytoene into zeta-carotene via the intermediary of phytofluene by the symmetrical introduction of two double bonds at the C-11 and C-11' positions of phytoene. Also active with phytofluene and 1,2-epoxyphytoene as substrates. This chain is 15-cis-phytoene desaturase (pds), found in Synechococcus elongatus (strain ATCC 33912 / PCC 7942 / FACHB-805) (Anacystis nidulans R2).